The following is an 883-amino-acid chain: Phosphoenolpyruvate carboxylase (883 aa).

Active-site residues include histidine 138 and lysine 546.

The protein belongs to the PEPCase type 1 family. It depends on Mg(2+) as a cofactor.

The catalysed reaction is oxaloacetate + phosphate = phosphoenolpyruvate + hydrogencarbonate. Forms oxaloacetate, a four-carbon dicarboxylic acid source for the tricarboxylic acid cycle. This is Phosphoenolpyruvate carboxylase from Salmonella choleraesuis (strain SC-B67).